Consider the following 586-residue polypeptide: BTB/POZ domain and ankyrin repeat-containing protein NPR1 (586 aa).

The BTB domain maps to 63 to 139 (SDADIVVEGI…VYTGKLKPSP (77 aa)). The C2HC NPR-type zinc finger occupies 142–156 (VSTCVHNVCAHDACR). Zn(2+) is bound by residues C145, C150, H152, and C155. ANK repeat units lie at residues 266-296 (KRIRRIHKALDSDDVELVKLLLTESNITLDE), 298-325 (NALHYAAAYCDPKVVTEVLALGLADVNL), and 329-358 (RGYTALHIAVMRKEPSIIVLLLTKGARASE). A salicylic acid-binding core (SBC) region spans residues 388–522 (EANKDRICID…LDKFIDDDLP (135 aa)). Position 433 (R433) interacts with salicylate. Positions 561-586 (NLSGLSSSSSTTSPEKIGANQKVREP) are disordered. Residues 562 to 573 (LSGLSSSSSTTS) are compositionally biased toward low complexity.

Belongs to the plant 'ANKYRIN-BTB/POZ' family. 'NPR1-like' subfamily. As to expression, highly expressed in leaves. Expressed at low levels in roots and stems.

It is found in the cytoplasm. It localises to the nucleus. The protein localises to the nuclear body. Its pathway is protein modification; protein ubiquitination. Salicylic acid (SA)-binding substrate-specific adapter of an E3 ubiquitin-protein ligase complex (CUL3-RBX1-BTB) which mediates the ubiquitination and subsequent proteasomal degradation of target proteins. Transcription cofactor that represses gene expression in the absence of salicylic acid (SA), when attached to negative cis-elements (W-box) with WRKY transcription factors, but stimulates gene expression upon activation by SA, when sumoylated and attached to positive cis-elements (as-1) with TGA transcription factors, thus confering immunity through a series of gene regulations ending in a significant increase in antimicrobial and defense genes expression. Probable component of the salicylic acid (SA) defense signaling pathway and pathogen-induced systemic acquired resistance (SAR). May be involved in disease resistance against fungal pathogens. May be involved in tolerance to salt and osmotic stresses. This chain is BTB/POZ domain and ankyrin repeat-containing protein NPR1, found in Malus hupehensis (Chinese crab apple).